The chain runs to 194 residues: AP-3 complex subunit sigma (194 aa).

It belongs to the adaptor complexes small subunit family. Adaptor protein complex 3 (AP-3) is a heterotetramer composed of 2 large adaptins (APL5 and APL6), a medium adaptin (APM3) and a small adaptin (APS3).

The protein localises to the golgi apparatus. It localises to the cytoplasmic vesicle membrane. Functionally, part of the AP-3 complex, an adaptor-related complex which is not clathrin-associated. The complex is associated with the Golgi region as well as more peripheral structures. It facilitates the budding of vesicles from the Golgi membrane and may be directly involved in trafficking to the vacuole. Required for the transport via the ALP pathway, which directs the transport of the cargo proteins PHO8 and VAM3 to the vacuole. In Saccharomyces cerevisiae (strain ATCC 204508 / S288c) (Baker's yeast), this protein is AP-3 complex subunit sigma (APS3).